A 507-amino-acid chain; its full sequence is Steroid (22S)-hydroxylase (507 aa).

Residues 12–32 (LLFFLPYILLALLTFYTTTVA) traverse the membrane as a helical segment. Residue cysteine 444 participates in heme binding.

It belongs to the cytochrome P450 family. The cofactor is heme.

It is found in the membrane. The enzyme catalyses a C27-steroid + reduced [NADPH--hemoprotein reductase] + O2 = a (22S)-22-hydroxy C27-steroid + oxidized [NADPH--hemoprotein reductase] + H2O + H(+). The catalysed reaction is a C28-steroid + reduced [NADPH--hemoprotein reductase] + O2 = a (22S)-22-hydroxy C28-steroid + oxidized [NADPH--hemoprotein reductase] + H2O + H(+). It carries out the reaction campesterol + reduced [NADPH--hemoprotein reductase] + O2 = (22S)-22-hydroxycampesterol + oxidized [NADPH--hemoprotein reductase] + H2O + H(+). It catalyses the reaction campestanol + reduced [NADPH--hemoprotein reductase] + O2 = 6-deoxycathasterone + oxidized [NADPH--hemoprotein reductase] + H2O + H(+). It participates in plant hormone biosynthesis; brassinosteroid biosynthesis. Involved in reduction steps of the biosynthesis of plant campesterol-derivative steroids, ending to castasterone (CS) but missing brassinolide (BL). Catalyzes the conversion of campesterol (CR) to (22S)-22-hydroxycampesterol (22-OHCR, 22-hydroxyCR) and of campestanol (CN) to 6-deoxycathasterone (6-deoxoCT). This chain is Steroid (22S)-hydroxylase, found in Brachypodium distachyon (Purple false brome).